The following is a 310-amino-acid chain: tRNA-cytidine(32) 2-sulfurtransferase (310 aa).

The PP-loop motif motif lies at 58 to 63 (SGGKDS). 3 residues coordinate [4Fe-4S] cluster: Cys-133, Cys-136, and Cys-224.

Belongs to the TtcA family. As to quaternary structure, homodimer. The cofactor is Mg(2+). Requires [4Fe-4S] cluster as cofactor.

The protein localises to the cytoplasm. It catalyses the reaction cytidine(32) in tRNA + S-sulfanyl-L-cysteinyl-[cysteine desulfurase] + AH2 + ATP = 2-thiocytidine(32) in tRNA + L-cysteinyl-[cysteine desulfurase] + A + AMP + diphosphate + H(+). The protein operates within tRNA modification. Catalyzes the ATP-dependent 2-thiolation of cytidine in position 32 of tRNA, to form 2-thiocytidine (s(2)C32). The sulfur atoms are provided by the cysteine/cysteine desulfurase (IscS) system. The polypeptide is tRNA-cytidine(32) 2-sulfurtransferase (Paracidovorax citrulli (strain AAC00-1) (Acidovorax citrulli)).